A 1383-amino-acid polypeptide reads, in one-letter code: DNA-directed RNA polymerase subunit beta (1383 aa).

It belongs to the RNA polymerase beta chain family. In terms of assembly, the RNAP catalytic core consists of 2 alpha, 1 beta, 1 beta' and 1 omega subunit. When a sigma factor is associated with the core the holoenzyme is formed, which can initiate transcription.

It carries out the reaction RNA(n) + a ribonucleoside 5'-triphosphate = RNA(n+1) + diphosphate. Its function is as follows. DNA-dependent RNA polymerase catalyzes the transcription of DNA into RNA using the four ribonucleoside triphosphates as substrates. The sequence is that of DNA-directed RNA polymerase subunit beta from Bartonella bacilliformis (strain ATCC 35685 / KC583 / Herrer 020/F12,63).